We begin with the raw amino-acid sequence, 133 residues long: Small ribosomal subunit protein uS19 (133 aa).

The protein belongs to the universal ribosomal protein uS19 family.

Functionally, protein S19 forms a complex with S13 that binds strongly to the 16S ribosomal RNA. In Thermococcus onnurineus (strain NA1), this protein is Small ribosomal subunit protein uS19.